The following is a 137-amino-acid chain: Large ribosomal subunit protein uL16c (137 aa).

Belongs to the universal ribosomal protein uL16 family. Part of the 50S ribosomal subunit.

Its subcellular location is the plastid. The chain is Large ribosomal subunit protein uL16c from Cuscuta reflexa (Southern Asian dodder).